Consider the following 143-residue polypeptide: 6,7-dimethyl-8-ribityllumazine synthase (143 aa).

5-amino-6-(D-ribitylamino)uracil is bound by residues W10, 44–46 (SFE), and 68–70 (CVI). 73 to 74 (DT) is a binding site for (2S)-2-hydroxy-3-oxobutyl phosphate. Catalysis depends on H76, which acts as the Proton donor. Y101 contributes to the 5-amino-6-(D-ribitylamino)uracil binding site. R115 is a (2S)-2-hydroxy-3-oxobutyl phosphate binding site.

This sequence belongs to the DMRL synthase family.

The catalysed reaction is (2S)-2-hydroxy-3-oxobutyl phosphate + 5-amino-6-(D-ribitylamino)uracil = 6,7-dimethyl-8-(1-D-ribityl)lumazine + phosphate + 2 H2O + H(+). It functions in the pathway cofactor biosynthesis; riboflavin biosynthesis; riboflavin from 2-hydroxy-3-oxobutyl phosphate and 5-amino-6-(D-ribitylamino)uracil: step 1/2. In terms of biological role, catalyzes the formation of 6,7-dimethyl-8-ribityllumazine by condensation of 5-amino-6-(D-ribitylamino)uracil with 3,4-dihydroxy-2-butanone 4-phosphate. This is the penultimate step in the biosynthesis of riboflavin. In Bacteroides fragilis (strain YCH46), this protein is 6,7-dimethyl-8-ribityllumazine synthase.